A 433-amino-acid chain; its full sequence is Tol-Pal system protein TolB (433 aa).

A signal peptide spans 1–26; sequence MNKLRLFRSFFAFLLPFGMATGAAHG.

The protein belongs to the TolB family. The Tol-Pal system is composed of five core proteins: the inner membrane proteins TolA, TolQ and TolR, the periplasmic protein TolB and the outer membrane protein Pal. They form a network linking the inner and outer membranes and the peptidoglycan layer.

It localises to the periplasm. Its function is as follows. Part of the Tol-Pal system, which plays a role in outer membrane invagination during cell division and is important for maintaining outer membrane integrity. In Methylobacillus flagellatus (strain ATCC 51484 / DSM 6875 / VKM B-1610 / KT), this protein is Tol-Pal system protein TolB.